Consider the following 1452-residue polypeptide: Receptor-type tyrosine-protein phosphatase mu (1452 aa).

Residues methionine 1–glycine 20 form the signal peptide. Over glutamate 21 to lysine 742 the chain is Extracellular. Positions threonine 22–arginine 184 constitute an MAM domain. Cysteine 27 and cysteine 36 are oxidised to a cystine. N-linked (GlcNAc...) asparagine glycans are attached at residues asparagine 72, asparagine 92, asparagine 131, and asparagine 249. Disulfide bonds link cysteine 96-cysteine 182 and cysteine 206-cysteine 260. Residues proline 186 to valine 277 form the Ig-like C2-type domain. Fibronectin type-III domains lie at proline 284–proline 379, glycine 382–aspartate 480, proline 482–serine 587, and proline 589–glutamine 671. Asparagine 406, asparagine 414, asparagine 454, asparagine 534, asparagine 544, asparagine 598, asparagine 651, and asparagine 681 each carry an N-linked (GlcNAc...) asparagine glycan. The chain crosses the membrane as a helical span at residues isoleucine 743 to methionine 764. At lysine 765–glycine 1452 the chain is on the cytoplasmic side. Residue serine 821 is modified to Phosphoserine. Tyrosine-protein phosphatase domains follow at residues phenylalanine 900–alanine 1154 and isoleucine 1186–tyrosine 1448. Substrate contacts are provided by residues aspartate 1063, cysteine 1095–arginine 1101, and glutamine 1139. Cysteine 1095 serves as the catalytic Phosphocysteine intermediate. Cysteine 1389 (phosphocysteine intermediate) is an active-site residue.

The protein belongs to the protein-tyrosine phosphatase family. Receptor class 2B subfamily. Homodimer.

The protein resides in the cell membrane. The catalysed reaction is O-phospho-L-tyrosyl-[protein] + H2O = L-tyrosyl-[protein] + phosphate. Receptor protein-tyrosine phosphatase that mediates homotypic cell-cell interactions and plays a role in adipogenic differentiation via modulation of p120 catenin/CTNND1 phosphorylation. Promotes CTNND1 dephosphorylation and prevents its cytoplasmic localization where it inhibits SLC2A4 membrane trafficking. In turn, SLC2A4 is directed to the plasma membrane and performs its glucose transporter function. The polypeptide is Receptor-type tyrosine-protein phosphatase mu (PTPRM) (Homo sapiens (Human)).